A 231-amino-acid chain; its full sequence is Aquaporin Z (231 aa).

The next 2 helical transmembrane spans lie at 9 to 29 (CFGT…AAGF) and 34 to 54 (IGFA…AFAV). Residues 63-65 (NPA) carry the NPA 1 motif. The next 3 helical transmembrane spans lie at 82-102 (VGYV…LYLI), 129-149 (YSML…LLVI), and 156-176 (FAPA…IHLI). Positions 186–188 (NPA) match the NPA 2 motif. A helical membrane pass occupies residues 202–222 (LEQLWFFWVVPIVGGIIGGLI).

It belongs to the MIP/aquaporin (TC 1.A.8) family. As to quaternary structure, homotetramer.

Its subcellular location is the cell inner membrane. The catalysed reaction is H2O(in) = H2O(out). Channel that permits osmotically driven movement of water in both directions. It is involved in the osmoregulation and in the maintenance of cell turgor during volume expansion in rapidly growing cells. It mediates rapid entry or exit of water in response to abrupt changes in osmolarity. The sequence is that of Aquaporin Z from Escherichia coli O6:H1 (strain CFT073 / ATCC 700928 / UPEC).